Here is an 851-residue protein sequence, read N- to C-terminus: Alanine--tRNA ligase (851 aa).

The Zn(2+) site is built by His-554, His-558, Cys-656, and His-660.

This sequence belongs to the class-II aminoacyl-tRNA synthetase family. It depends on Zn(2+) as a cofactor.

The protein resides in the cytoplasm. It catalyses the reaction tRNA(Ala) + L-alanine + ATP = L-alanyl-tRNA(Ala) + AMP + diphosphate. Functionally, catalyzes the attachment of alanine to tRNA(Ala) in a two-step reaction: alanine is first activated by ATP to form Ala-AMP and then transferred to the acceptor end of tRNA(Ala). Also edits incorrectly charged Ser-tRNA(Ala) and Gly-tRNA(Ala) via its editing domain. The chain is Alanine--tRNA ligase from Aliarcobacter butzleri (strain RM4018) (Arcobacter butzleri).